We begin with the raw amino-acid sequence, 405 residues long: Intraflagellar transport protein 57 homolog (405 aa).

Residues 252–380 are a coiled coil; the sequence is ETLKTNILEN…AQLNLEVALL (129 aa).

The protein belongs to the IFT57 family.

It localises to the cytoplasm. It is found in the cytoskeleton. The protein resides in the cilium basal body. Its function is as follows. Required for the formation of cilia. This chain is Intraflagellar transport protein 57 homolog, found in Drosophila melanogaster (Fruit fly).